The following is a 292-amino-acid chain: NAD kinase (292 aa).

Catalysis depends on D73, which acts as the Proton acceptor. NAD(+) is bound by residues 73-74 (DG), 147-148 (NE), H158, R175, D177, 188-193 (TAYSLS), and Q247.

The protein belongs to the NAD kinase family. A divalent metal cation serves as cofactor.

The protein localises to the cytoplasm. It carries out the reaction NAD(+) + ATP = ADP + NADP(+) + H(+). In terms of biological role, involved in the regulation of the intracellular balance of NAD and NADP, and is a key enzyme in the biosynthesis of NADP. Catalyzes specifically the phosphorylation on 2'-hydroxyl of the adenosine moiety of NAD to yield NADP. The protein is NAD kinase of Shigella boydii serotype 4 (strain Sb227).